We begin with the raw amino-acid sequence, 294 residues long: Phosphoribosylaminoimidazole-succinocarboxamide synthase (294 aa).

The protein belongs to the SAICAR synthetase family.

It catalyses the reaction 5-amino-1-(5-phospho-D-ribosyl)imidazole-4-carboxylate + L-aspartate + ATP = (2S)-2-[5-amino-1-(5-phospho-beta-D-ribosyl)imidazole-4-carboxamido]succinate + ADP + phosphate + 2 H(+). The protein operates within purine metabolism; IMP biosynthesis via de novo pathway; 5-amino-1-(5-phospho-D-ribosyl)imidazole-4-carboxamide from 5-amino-1-(5-phospho-D-ribosyl)imidazole-4-carboxylate: step 1/2. The protein is Phosphoribosylaminoimidazole-succinocarboxamide synthase of Thermoplasma volcanium (strain ATCC 51530 / DSM 4299 / JCM 9571 / NBRC 15438 / GSS1).